Reading from the N-terminus, the 299-residue chain is Acetaldehyde dehydrogenase (299 aa).

Ser-11–Ile-14 is an NAD(+) binding site. Catalysis depends on Cys-126, which acts as the Acyl-thioester intermediate. NAD(+)-binding positions include Ser-157 to Asn-165 and Asn-267.

This sequence belongs to the acetaldehyde dehydrogenase family.

The catalysed reaction is acetaldehyde + NAD(+) + CoA = acetyl-CoA + NADH + H(+). The polypeptide is Acetaldehyde dehydrogenase (Bacillus cereus (strain ATCC 10987 / NRS 248)).